A 61-amino-acid chain; its full sequence is Small ribosomal subunit protein uS14 (61 aa).

C24, C27, C40, and C43 together coordinate Zn(2+).

Belongs to the universal ribosomal protein uS14 family. Zinc-binding uS14 subfamily. Part of the 30S ribosomal subunit. Contacts proteins S3 and S10. Requires Zn(2+) as cofactor.

Binds 16S rRNA, required for the assembly of 30S particles and may also be responsible for determining the conformation of the 16S rRNA at the A site. This Acidithiobacillus ferrooxidans (strain ATCC 23270 / DSM 14882 / CIP 104768 / NCIMB 8455) (Ferrobacillus ferrooxidans (strain ATCC 23270)) protein is Small ribosomal subunit protein uS14.